Reading from the N-terminus, the 391-residue chain is MAKHCQGAAAEDIGTISDEELLRWSKEELAKRLRKVENEKMSLMVEHGNMMKDVNRRLQVHLHEIRGLKEVNQKLQDDNQELRELCCFLDDDRQKGKKLSREWQRFGRHSATMMWKEVGVYQQKLKELEAKQESLIRDNLELKEIILMLDEERNGAGSRSSIDSQNSLTNLNGSSGPRDVGDGSSTSSTGSAGSPDHHHHHHHHTKPTENKAGTVRKSTDDLSIPPHHRSIPNGLNDSSTTYIRQLETRVKLLEDDNKLLSQHSTSGELRTLRKGLSPYHSESQLSPLPQYQEPLQNGSTRVTPEISSTAPAGYIPVVQKPEAVVHAMKVLEVHENLDRQMSDTYEEDLSEKEKAIVREMCNVVWRKLGDATNSKPSIRQHLSGNQFKGPL.

Coiled-coil stretches lie at residues 19–86 and 116–146; these read EELL…RELC and KEVGVYQQKLKELEAKQESLIRDNLELKEII. Disordered stretches follow at residues 155–238 and 278–303; these read GAGS…LNDS and PYHSESQLSPLPQYQEPLQNGSTRVT. Residues 157 to 175 show a composition bias toward polar residues; sequence GSRSSIDSQNSLTNLNGSS. Residues 182-194 show a composition bias toward low complexity; the sequence is DGSSTSSTGSAGS. A compositionally biased stretch (polar residues) spans 280–303; the sequence is HSESQLSPLPQYQEPLQNGSTRVT.

The protein belongs to the CCDC85 family.

It localises to the cell junction. Its subcellular location is the tight junction. The protein localises to the adherens junction. May play a role in cell-cell adhesion and epithelium development through its interaction with proteins of the beta-catenin family. May play an important role in cortical development, especially in the maintenance of radial glia. In Xenopus tropicalis (Western clawed frog), this protein is Coiled-coil domain-containing protein 85C (ccdc85c).